We begin with the raw amino-acid sequence, 267 residues long: Probable ribose-5-phosphate isomerase 1 (267 aa).

Residue Gly-2 is modified to N-acetylglycine. Position 92 is a phosphoserine (Ser-92).

This sequence belongs to the ribose 5-phosphate isomerase family. Expressed in roots, cotyledons, leaves and flowers.

It is found in the cytoplasm. It carries out the reaction aldehydo-D-ribose 5-phosphate = D-ribulose 5-phosphate. It functions in the pathway carbohydrate degradation; pentose phosphate pathway; D-ribose 5-phosphate from D-ribulose 5-phosphate (non-oxidative stage): step 1/1. In terms of biological role, catalyzes the reversible conversion of ribose-5-phosphate to ribulose 5-phosphate. This chain is Probable ribose-5-phosphate isomerase 1 (RPI1), found in Arabidopsis thaliana (Mouse-ear cress).